A 195-amino-acid chain; its full sequence is Thymidylate kinase (195 aa).

7–14 (GIDGVGKS) lines the ATP pocket.

It belongs to the thymidylate kinase family.

It catalyses the reaction dTMP + ATP = dTDP + ADP. Phosphorylation of dTMP to form dTDP in both de novo and salvage pathways of dTTP synthesis. The chain is Thymidylate kinase from Campylobacter concisus (strain 13826).